The chain runs to 636 residues: Tumor protein p73 (636 aa).

A transactivation region spans residues Met-1–Asp-46. Thr-27 carries the phosphothreonine; by PLK1 modification. A Phosphotyrosine; by SRC and HCK modification is found at Tyr-28. The interval Arg-78–Ser-104 is disordered. Polar residues predominate over residues Pro-94–Ser-104. Tyr-99 carries the post-translational modification Phosphotyrosine; by ABL1. The DNA-binding stretch occupies residues Phe-131–Arg-310. Cys-194, His-197, Cys-258, and Cys-262 together coordinate Zn(2+). The tract at residues Ala-314–Lys-345 is disordered. Residues Lys-345–Leu-380 form an interaction with HIPK2 region. Residues Lys-345–Val-386 are oligomerization. The PPxY motif motif lies at Pro-483 to Tyr-487. One can recognise an SAM domain in the interval Pro-485–Gly-551. Lys-627 is covalently cross-linked (Glycyl lysine isopeptide (Lys-Gly) (interchain with G-Cter in SUMO); in isoform Alpha). Lys-627 is covalently cross-linked (Glycyl lysine isopeptide (Lys-Gly) (interchain with G-Cter in SUMO2)).

This sequence belongs to the p53 family. In terms of assembly, found in a complex with p53/TP53 and CABLES1. The C-terminal oligomerization domain binds to the ABL1 tyrosine kinase SH3 domain. Interacts with HECW2. Isoform Beta interacts homotypically and with p53/TP53, whereas isoform Alpha does not. Isoform Gamma interacts homotypically and with all p73 isoforms. Isoform Delta interacts with isoform Gamma, isoform Alpha, and homotypically. Isoforms Alpha and Beta interact with HIPK2. Isoform Alpha interacts with RANBP9. Isoform Beta interacts with WWOX. Interacts (via SAM domain) with FBXO45 (via B30.2/SPRY domain). Interacts with YAP1 (phosphorylated form). Interacts with HCK (via SH3 domain); this inhibits TP73 activity and degradation. Interacts (via SAM domain) with NQO1; this interaction is NADH-dependent, stabilizes TP73 in response to oxidative stress and protects it from ubiquitin-independent degradation by the 20S proteasome. (Microbial infection) Interacts with Epstein-Barr virus protein EBNA6; this interaction inhibits TP73-mediated apoptotic pathway. Requires Zn(2+) as cofactor. In terms of processing, isoform alpha (but not isoform beta) is sumoylated on Lys-627, which potentiates proteasomal degradation but does not affect transcriptional activity. Phosphorylation by PLK1 and PLK3 inhibits the transcription regulator activity and pro-apoptotic function. Higher levels of phosphorylation seen in the brain from patients with Huntington disease. Post-translationally, polyubiquitinated by RCHY1/PIRH2; leading to its degradation by the proteasome. As to expression, expressed in striatal neurons of patients with Huntington disease (at protein level). Brain, kidney, placenta, colon, heart, liver, spleen, skeletal muscle, prostate, thymus and pancreas. Highly expressed in fetal tissue. Expressed in the respiratory epithelium.

It localises to the nucleus. The protein resides in the cytoplasm. In terms of biological role, participates in the apoptotic response to DNA damage. Isoforms containing the transactivation domain are pro-apoptotic, isoforms lacking the domain are anti-apoptotic and block the function of p53 and transactivating p73 isoforms. May be a tumor suppressor protein. Is an activator of FOXJ1 expression. It is an essential factor for the positive regulation of lung ciliated cell differentiation. In Homo sapiens (Human), this protein is Tumor protein p73 (TP73).